The primary structure comprises 1259 residues: Lysine-specific demethylase 2B (1259 aa).

Residues 147–315 (FSHTKLERVV…MQLRVFEIED (169 aa)) form the JmjC domain. Thr208 serves as a coordination point for substrate. The Fe cation site is built by His211 and Asp213. Lys228 provides a ligand contact to substrate. His283 is a Fe cation binding site. Residues 388 to 402 (EEKGNLVEKPSKQSG) are compositionally biased toward basic and acidic residues. Disordered stretches follow at residues 388 to 463 (EEKG…ATDM) and 536 to 562 (KPSKNRAVGRPKGKIASSPAVKLSANR). Positions 403 to 413 (DESSTTNSTHS) are enriched in polar residues. The segment covering 414-423 (NGKDAAEKKQ) has biased composition (basic and acidic residues). Over residues 426 to 437 (TLMQQLKRTLSN) the composition is skewed to polar residues. The span at 536-548 (KPSKNRAVGRPKG) shows a compositional bias: basic residues. The segment at 567 to 613 (ARRRRTRCRKCEACLRTECGECHFCKDMKKFGGPGRMKQSCIMRQCI) adopts a CXXC-type zinc-finger fold. Positions 574, 577, 580, 585, 588, 591, 607, 612, 623, 626, 649, 652, 657, 660, 680, and 683 each coordinate Zn(2+). Residues 620–686 (TAVCLVCGEA…CWECPKCNHA (67 aa)) form a PHD-type zinc finger. Basic and acidic residues-rich tracts occupy residues 729 to 763 (KKKVEREETPKQIPEEQPKKKPTEGIIKKKPEDGH) and 771 to 790 (EKPPDPSVRKRLKLVKEEKL). Residues 729-958 (KKKVEREETP…PPPSLSPPKC (230 aa)) form a disordered region. The segment covering 835-848 (SRSSSPTAGPSTEG) has biased composition (polar residues). Basic residues predominate over residues 854–863 (KKKIRRKRRV). Positions 864–877 (SNKELSKELSKELN) are enriched in basic and acidic residues. Residues 864 to 891 (SNKELSKELSKELNQEIQKTESSLASEN) are a coiled coil. The span at 878 to 889 (QEIQKTESSLAS) shows a compositional bias: polar residues. Basic and acidic residues predominate over residues 890–908 (ENHHPIKSEPESDNEESKK). The F-box domain maps to 985 to 1030 (AHVMQREVWMAIFSYLSHRDLCICMRICRTWNRWCCDKRLWTQIDL). LRR repeat units lie at residues 1056–1081 (WTNISKKQLSWLINRLPALRDLNLSG), 1082–1105 (CSWIAVSALCSSCCPLLRTLNVQW), 1145–1170 (GLDITDASLRLMIRHMPLLAKLDLSY), 1171–1200 (CNHVTDQSINLLTAVGTSTRDTLLEMNLSD), and 1201–1225 (CNNVTDQCLTFFKRCGNICLIDLRF).

The protein belongs to the JHDM1 histone demethylase family. The cofactor is Fe(2+).

Its subcellular location is the nucleus. The protein localises to the nucleolus. It localises to the chromosome. It catalyses the reaction N(6),N(6)-dimethyl-L-lysyl(36)-[histone H3] + 2 2-oxoglutarate + 2 O2 = L-lysyl(36)-[histone H3] + 2 formaldehyde + 2 succinate + 2 CO2. Its activity is regulated as follows. Histone demethylase activity is inhibited by fumarate. In terms of biological role, histone demethylase that demethylates 'Lys-4' and 'Lys-36' of histone H3, thereby playing a central role in histone code. Preferentially demethylates trimethylated H3 'Lys-4' and dimethylated H3 'Lys-36' residue while it has weak or no activity for mono- and tri-methylated H3 'Lys-36'. Preferentially binds the transcribed region of ribosomal RNA and represses the transcription of ribosomal RNA genes which inhibits cell growth and proliferation. The protein is Lysine-specific demethylase 2B (kdm2b) of Xenopus laevis (African clawed frog).